The sequence spans 193 residues: Holliday junction branch migration complex subunit RuvA (193 aa).

Residues 1-64 (MIGRIAGILL…EDAHLLYGFL (64 aa)) form a domain I region. Residues 65 to 139 (TPQERTTFRE…GKLGADLGAL (75 aa)) are domain II. The flexible linker stretch occupies residues 139 to 143 (LAGAA). The domain III stretch occupies residues 144–193 (SASDHATDILNALLALGYSEKEGLAAIKNVPAGTGVSEGIKLALKALSKA).

The protein belongs to the RuvA family. Homotetramer. Forms an RuvA(8)-RuvB(12)-Holliday junction (HJ) complex. HJ DNA is sandwiched between 2 RuvA tetramers; dsDNA enters through RuvA and exits via RuvB. An RuvB hexamer assembles on each DNA strand where it exits the tetramer. Each RuvB hexamer is contacted by two RuvA subunits (via domain III) on 2 adjacent RuvB subunits; this complex drives branch migration. In the full resolvosome a probable DNA-RuvA(4)-RuvB(12)-RuvC(2) complex forms which resolves the HJ.

The protein resides in the cytoplasm. The RuvA-RuvB-RuvC complex processes Holliday junction (HJ) DNA during genetic recombination and DNA repair, while the RuvA-RuvB complex plays an important role in the rescue of blocked DNA replication forks via replication fork reversal (RFR). RuvA specifically binds to HJ cruciform DNA, conferring on it an open structure. The RuvB hexamer acts as an ATP-dependent pump, pulling dsDNA into and through the RuvAB complex. HJ branch migration allows RuvC to scan DNA until it finds its consensus sequence, where it cleaves and resolves the cruciform DNA. The protein is Holliday junction branch migration complex subunit RuvA of Burkholderia cenocepacia (strain HI2424).